The following is a 360-amino-acid chain: Tyrosine-protein phosphatase non-receptor type 7 (360 aa).

A disordered region spans residues 1 to 37; that stretch reads MVQAHGGRSRAQPLTLSLGAAMTQPPPEKTPAKKHVR. The interaction with MAP kinases stretch occupies residues 38–51; that stretch reads LQERRGSNVALMLD. Residue S44 is modified to Phosphoserine. T66 is modified (phosphothreonine). Residues S93, S110, and S143 each carry the phosphoserine modification. One can recognise a Tyrosine-protein phosphatase domain in the interval 97–350; the sequence is LEEEFLKIPS…QFLHHTLALY (254 aa). Residues D257, 291–297, and Q335 each bind substrate; that span reads CSAGIGR. Residue C291 is the Phosphocysteine intermediate of the active site. A Cysteine sulfenic acid (-SOH) modification is found at C291.

It belongs to the protein-tyrosine phosphatase family. Non-receptor class subfamily. Monomer. Interacts with MAPK1, MAPK3 and several other MAP kinases. In terms of processing, phosphorylated on serine residues in resting T-cells. Phosphorylation increases upon exposure to stimuli that increase intracellular cAMP levels. Phosphorylation leads to dissociation of bound MAP kinases. Post-translationally, oxidized at active site cysteine. Treatment with pervanadate (vanadate and H(2)O(2)) or with antigen enhanced oxidation of active site cysteine. Expressed exclusively in thymus and spleen.

It localises to the cytoplasm. Its subcellular location is the cytoskeleton. It carries out the reaction O-phospho-L-tyrosyl-[protein] + H2O = L-tyrosyl-[protein] + phosphate. Its activity is regulated as follows. Inhibited in cells after FCER1A triggering. In terms of biological role, protein phosphatase that acts preferentially on tyrosine-phosphorylated MAPK1. Plays a role in the regulation of T and B-lymphocyte development and signal transduction. The chain is Tyrosine-protein phosphatase non-receptor type 7 (PTPN7) from Homo sapiens (Human).